The sequence spans 429 residues: Type II methyltransferase M.AgeI (429 aa).

The region spanning 1–429 (MKTIDLFCGA…MAETIKVAIS (429 aa)) is the SAM-dependent MTase C5-type domain. Cys-80 is an active-site residue.

It belongs to the class I-like SAM-binding methyltransferase superfamily. C5-methyltransferase family.

It carries out the reaction a 2'-deoxycytidine in DNA + S-adenosyl-L-methionine = a 5-methyl-2'-deoxycytidine in DNA + S-adenosyl-L-homocysteine + H(+). A methylase, recognizes the double-stranded sequence 5'-ACCGGT-3', methylates C-3 on both strands, and protects the DNA from cleavage by the AgeI endonuclease. The polypeptide is Type II methyltransferase M.AgeI (ageIM) (Thalassovita gelatinovora (Thalassobius gelatinovorus)).